The following is a 107-amino-acid chain: Prepilin peptidase-dependent protein C (107 aa).

A propeptide spanning residues 1–10 (MSASLKNQQG) is cleaved from the precursor. The residue at position 11 (Phe-11) is an N-methylphenylalanine. The chain crosses the membrane as a helical span at residues 11 to 30 (FSLPEVMLAMVLMVMIVTAL).

Its subcellular location is the membrane. In terms of biological role, not yet known. The sequence is that of Prepilin peptidase-dependent protein C (ppdC) from Escherichia coli (strain K12).